We begin with the raw amino-acid sequence, 86 residues long: uncharacterized protein (86 aa).

Residues 1–22 (MKTINTVVAAMALSTLSFGVFA) form the signal peptide.

Belongs to the BhsA/McbA family.

Its subcellular location is the periplasm. This is an uncharacterized protein from Escherichia coli O6:H1 (strain CFT073 / ATCC 700928 / UPEC).